The primary structure comprises 285 residues: Iron uptake system component EfeM (285 aa).

Positions Met-1–Ala-34 are cleaved as a signal peptide.

The protein belongs to the EfeM/EfeO family. As to quaternary structure, component of the iron transporter efeUOB/M complex composed of EfeU, EfeM and EfeB.

It is found in the periplasm. Its function is as follows. Part of the iron transporter system efeUOB/M involved in iron import. Specifically binds Fe(3+), which is produced by EfeB-mediated oxidation of Fe(2+), and delivers it to the cell inner membrane permease EfeU. Also binds Zn(2+) and Cu(2+) in vitro. This Pseudomonas syringae pv. syringae (strain B728a) protein is Iron uptake system component EfeM.